The sequence spans 154 residues: UPF0178 protein GM21_2006 (154 aa).

The protein belongs to the UPF0178 family.

The polypeptide is UPF0178 protein GM21_2006 (Geobacter sp. (strain M21)).